The sequence spans 194 residues: Inosine triphosphate pyrophosphatase (194 aa).

11-16 (TGNAKK) contacts ITP. Position 39 (glutamate 39) interacts with Mg(2+). ITP is bound by residues lysine 51, 67–68 (DT), lysine 84, 143–146 (FGWD), lysine 166, and 171–172 (HR).

The protein belongs to the HAM1 NTPase family. As to quaternary structure, homodimer. Mg(2+) serves as cofactor. It depends on Mn(2+) as a cofactor.

The protein resides in the cytoplasm. It carries out the reaction ITP + H2O = IMP + diphosphate + H(+). The enzyme catalyses dITP + H2O = dIMP + diphosphate + H(+). It catalyses the reaction XTP + H2O = XMP + diphosphate + H(+). Its function is as follows. Pyrophosphatase that hydrolyzes non-canonical purine nucleotides such as inosine triphosphate (ITP), deoxyinosine triphosphate (dITP) or xanthosine 5'-triphosphate (XTP) to their respective monophosphate derivatives. The enzyme does not distinguish between the deoxy- and ribose forms. Probably excludes non-canonical purines from RNA and DNA precursor pools, thus preventing their incorporation into RNA and DNA and avoiding chromosomal lesions. The sequence is that of Inosine triphosphate pyrophosphatase (itpa) from Dictyostelium discoideum (Social amoeba).